The primary structure comprises 148 residues: Hemoglobin subunit beta-1 (148 aa).

The region spanning 3–148 (EWTDAERTAI…VVSALCRQYH (146 aa)) is the Globin domain. Heme b contacts are provided by His-64 and His-93.

In terms of assembly, heterotetramer of two alpha chains and two beta chains. In terms of tissue distribution, red blood cells.

In terms of biological role, involved in oxygen transport from gills to the various peripheral tissues. This chain is Hemoglobin subunit beta-1 (ba1), found in Danio rerio (Zebrafish).